The chain runs to 139 residues: NADPH-dependent 7-cyano-7-deazaguanine reductase (139 aa).

Cys34 functions as the Thioimide intermediate in the catalytic mechanism. The active-site Proton donor is Asp41. Substrate is bound by residues 56–58 and 75–76; these read VEL and HE.

This sequence belongs to the GTP cyclohydrolase I family. QueF type 1 subfamily.

The protein resides in the cytoplasm. It carries out the reaction 7-aminomethyl-7-carbaguanine + 2 NADP(+) = 7-cyano-7-deazaguanine + 2 NADPH + 3 H(+). Its pathway is tRNA modification; tRNA-queuosine biosynthesis. Catalyzes the NADPH-dependent reduction of 7-cyano-7-deazaguanine (preQ0) to 7-aminomethyl-7-deazaguanine (preQ1). This Nitrosospira multiformis (strain ATCC 25196 / NCIMB 11849 / C 71) protein is NADPH-dependent 7-cyano-7-deazaguanine reductase.